The primary structure comprises 150 residues: Protein-export protein SecB (150 aa).

This sequence belongs to the SecB family. As to quaternary structure, homotetramer, a dimer of dimers. One homotetramer interacts with 1 SecA dimer.

The protein resides in the cytoplasm. In terms of biological role, one of the proteins required for the normal export of preproteins out of the cell cytoplasm. It is a molecular chaperone that binds to a subset of precursor proteins, maintaining them in a translocation-competent state. It also specifically binds to its receptor SecA. The chain is Protein-export protein SecB from Acidovorax ebreus (strain TPSY) (Diaphorobacter sp. (strain TPSY)).